We begin with the raw amino-acid sequence, 781 residues long: MAPYSLLVTRLQKALGVRQYHVASVLCQRAKVAMSHFEPHEYIRYDLLEKNIDIVRKRLNRPLTLSEKIVYGHLDDPANQEIERGKTYLRLRPDRVAMQDATAQMAMLQFISSGLPKVAVPSTIHCDHLIEAQLGGEKDLRRAKDINQEVYNFLATAGAKYGVGFWRPGSGIIHQIILENYAYPGVLLIGTDSHTPNGGGLGGICIGVGGADAVDVMAGIPWELKCPKVIGVKLTGSLSGWTSPKDVILKVAGILTVKGGTGAIVEYHGPGVDSISCTGMATICNMGAEIGATTSVFPYNHRMKKYLSKTGRADIANLADEFKDHLVPDPGCHYDQVIEINLSELKPHINGPFTPDLAHPVAEVGSVAEKEGWPLDIRVGLIGSCTNSSYEDMGRSAAVAKQALAHGLKCKSQFTITPGSEQIRATIERDGYAQVLRDVGGIVLANACGPCIGQWDRKDIKKGEKNTIVTSYNRNFTGRNDANPETHAFVTSPEIVTALAIAGTLKFNPETDFLTGKDGKKFKLEAPDADELPRAEFDPGQDTYQHPPKDSSGQRVDVSPTSQRLQLLEPFDKWDGKDLEDLQILIKVKGKCTTDHISAAGPWLKFRGHLDNISNNLLIGAINIENRKANSVRNAVTQEFGPVPDTARYYKQHGIRWVVIGDENYGEGSSREHRALEPRHLGGRAIITKSFARIHETNLKKQGLLPLTFADPADYNKIHPVDKLTIQGLKDFAPGKPLKCIIKHPNGTQETILLNHTFNETQIEWFRAGSALNRMKELQQK.

Residues 1–27 (MAPYSLLVTRLQKALGVRQYHVASVLC) constitute a mitochondrion transit peptide. Gln28 carries the pyrrolidone carboxylic acid modification. At Lys31 the chain carries N6-succinyllysine. Lys50 carries the N6-acetyllysine; alternate modification. Lys50 is subject to N6-succinyllysine; alternate. Substrate is bound at residue Gln99. An N6-acetyllysine; alternate mark is found at Lys138 and Lys144. N6-succinyllysine; alternate is present on residues Lys138 and Lys144. Substrate is bound at residue 192-194 (DSH). At Lys233 the chain carries N6-acetyllysine; alternate. Lys233 is modified (N6-succinyllysine; alternate). Cys385 provides a ligand contact to [4Fe-4S] cluster. Residue Lys411 is modified to N6-succinyllysine. [4Fe-4S] cluster contacts are provided by Cys448 and Cys451. Substrate is bound by residues Arg474 and Arg479. Lys517 and Lys523 each carry N6-acetyllysine; alternate. 2 positions are modified to N6-succinyllysine; alternate: Lys517 and Lys523. Residues 524 to 537 (LEAPDADELPRAEF) are compositionally biased toward basic and acidic residues. The segment at 524 to 561 (LEAPDADELPRAEFDPGQDTYQHPPKDSSGQRVDVSPT) is disordered. N6-succinyllysine is present on Lys549. Residues 551–561 (SSGQRVDVSPT) are compositionally biased toward polar residues. Ser559 carries the phosphoserine modification. Lys573 is modified (N6-acetyllysine; alternate). Lys573 bears the N6-succinyllysine; alternate mark. Lys577 and Lys591 each carry N6-succinyllysine. Lys605 carries the N6-acetyllysine; alternate modification. Residue Lys605 is modified to N6-succinyllysine; alternate. Arg607 lines the substrate pocket. Lys628 carries the N6-succinyllysine modification. Ser670 bears the Phosphoserine mark. 670–671 (SR) is a binding site for substrate. Lys689 is modified (N6-succinyllysine). N6-acetyllysine; alternate occurs at positions 723 and 730. An N6-succinyllysine; alternate mark is found at Lys723 and Lys730. N6-acetyllysine is present on residues Lys736, Lys739, and Lys743.

Belongs to the aconitase/IPM isomerase family. As to quaternary structure, monomer. It depends on [4Fe-4S] cluster as a cofactor. Forms covalent cross-links mediated by transglutaminase TGM2, between a glutamine and the epsilon-amino group of a lysine residue, forming homopolymers and heteropolymers.

Its subcellular location is the mitochondrion. The enzyme catalyses citrate = D-threo-isocitrate. The protein operates within carbohydrate metabolism; tricarboxylic acid cycle; isocitrate from oxaloacetate: step 2/2. Catalyzes the isomerization of citrate to isocitrate via cis-aconitate. This Sus scrofa (Pig) protein is Aconitate hydratase, mitochondrial (ACO2).